The following is a 183-amino-acid chain: Gamma-crystallin N (183 aa).

Beta/gamma crystallin 'Greek key' domains are found at residues 6 to 46 (GKIT…RVES), 47 to 89 (GAWV…RPVG), 95 to 136 (FRID…KVYG), and 138 to 180 (GAWV…RRVL).

Belongs to the beta/gamma-crystallin family. As to quaternary structure, monomer. In terms of tissue distribution, detected in the auditory hindbrain where it is highly expressed in the medial nucleus of the trapezoid body, but also present in other nuclei of the superior olivary complex.

Functionally, crystallins are the dominant structural components of the vertebrate eye lens. Also plays an important role for integrity and function of auditory nuclei. The protein is Gamma-crystallin N of Rattus norvegicus (Rat).